Here is a 434-residue protein sequence, read N- to C-terminus: Cysteine proteinase 6 (434 aa).

An N-terminal signal peptide occupies residues 1–19 (MKVLSALCVLLVSVATAKQ). A propeptide spans 20–113 (QLSELQYRNA…SEKVFGGVQA (94 aa)) (activation peptide). 2 disulfide bridges follow: C133–C178 and C169–C211. C136 is a catalytic residue. Residue N227 is glycosylated (N-linked (GlcNAc...) asparagine). An intrachain disulfide couples C269 to C416. Residue H276 is part of the active site. The segment at 285 to 384 (SGSSGSQSQS…GGNSNSGDYP (100 aa)) is disordered. Residues 288-347 (SGSQSQSAGSQSQSSNNNWSESSQSQDSNSWSQSSQSQSSQDSNSWSQSSQSQGSNSFTG) are compositionally biased toward low complexity. The N-linked (GlcNAc...) asparagine glycan is linked to N305. A compositionally biased stretch (gly residues) spans 348–358 (AGTGSGSGSVS). Residues 359–381 (GSGSASGSSSFSGSSNGGNSNSG) show a composition bias toward low complexity. The active site involves N394.

This sequence belongs to the peptidase C1 family.

The protein resides in the lysosome. This is Cysteine proteinase 6 (cprF) from Dictyostelium discoideum (Social amoeba).